We begin with the raw amino-acid sequence, 142 residues long: Putative transcriptional regulatory protein PF0535 (142 aa).

The protein belongs to the Tfx family.

Putative transcriptional regulator. The polypeptide is Putative transcriptional regulatory protein PF0535 (Pyrococcus furiosus (strain ATCC 43587 / DSM 3638 / JCM 8422 / Vc1)).